Here is a 447-residue protein sequence, read N- to C-terminus: UPF0597 protein Amet_4665 (447 aa).

Belongs to the UPF0597 family.

In Alkaliphilus metalliredigens (strain QYMF), this protein is UPF0597 protein Amet_4665.